We begin with the raw amino-acid sequence, 422 residues long: Hispidin-3-hydroxylase (422 aa).

The helical transmembrane segment at 6–26 (NSLSVLIVGAGLGGLAAAIAL) threads the bilayer. FAD contacts are provided by alanine 50, arginine 108, and aspartate 318.

The protein belongs to the paxM FAD-dependent monooxygenase family. As to quaternary structure, monomer. It depends on FAD as a cofactor.

Its subcellular location is the membrane. The enzyme catalyses hispidin + NADH + O2 + H(+) = 3-hydroxyhispidin + NAD(+) + H2O. The catalysed reaction is hispidin + NADPH + O2 + H(+) = 3-hydroxyhispidin + NADP(+) + H2O. It participates in secondary metabolite biosynthesis. In terms of biological role, hispidin-3-hydroxylase; part of the gene cluster that mediates the fungal bioluminescence cycle. Hydroxylates hispidin in order to produce the fungal luciferin 3-hydroxyhispidin. The fungal bioluminescence cycle begins with the hispidin synthetase that catalyzes the formation of hispidin which is further hydroxylated by the hispidin-3-hydroxylase, yielding the fungal luciferin 3-hydroxyhispidin. The luciferase then produces an endoperoxide as a high-energy intermediate with decomposition that yields oxyluciferin (also known as caffeoylpyruvate) and light emission. Oxyluciferin can be recycled to caffeic acid by caffeoylpyruvate hydrolase. This is Hispidin-3-hydroxylase from Neonothopanus nambi (Agaricus nambi).